The primary structure comprises 201 residues: dTTP/UTP pyrophosphatase (201 aa).

The Proton acceptor role is filled by D73.

Belongs to the Maf family. YhdE subfamily. Requires a divalent metal cation as cofactor.

Its subcellular location is the cytoplasm. The catalysed reaction is dTTP + H2O = dTMP + diphosphate + H(+). The enzyme catalyses UTP + H2O = UMP + diphosphate + H(+). In terms of biological role, nucleoside triphosphate pyrophosphatase that hydrolyzes dTTP and UTP. May have a dual role in cell division arrest and in preventing the incorporation of modified nucleotides into cellular nucleic acids. This Pseudomonas aeruginosa (strain ATCC 15692 / DSM 22644 / CIP 104116 / JCM 14847 / LMG 12228 / 1C / PRS 101 / PAO1) protein is dTTP/UTP pyrophosphatase.